The primary structure comprises 60 residues: Large ribosomal subunit protein bL32 (60 aa).

The tract at residues 1–44 (MAVQQNKKSRSARDMRRSHDALEASTLSVEKTTGEVHLRHHVSP) is disordered. Positions 11–22 (SARDMRRSHDAL) are enriched in basic and acidic residues.

This sequence belongs to the bacterial ribosomal protein bL32 family.

The sequence is that of Large ribosomal subunit protein bL32 from Pseudomonas fluorescens (strain SBW25).